The chain runs to 1415 residues: MNQELSTNPFNPVAPVKTFDEIKISLASPERILSWSYGEIKKPETINYRTFKPERDGLFCARIFGPIKDYECLCGKYKRMKYRGVVCEKCGVEVTLQKVRRERMGHIELAAPVAHIWFLKSLPSRIGLMLDMTLRDLERILYFENYVVIEPGLTDLTYGQLMTEEEFLDAQDQYGADAFTANIGAEAIREMLSAIDLEQTAETLREELKEATGELKPKKIIKRLKIVESFLESGNRPEWMILTVLPVIPPELRPLVPLDGGRFATSDLNDLYRRVINRNNRLKRLIELRAPDIIVRNEKRMLQEAVDALFDNGRRGRVITGTNKRPLKSLSDMLKGKQGRFRQNLLGKRVDFSGRSVIVTGPELKLHQCGLPKKMALELFKPFIYSRLEAKGLSSTVKQAKKLVEKERPEVWDILDEVIREHPVLLNRAPTLHRLGIQAFEPILIEGKAIQLHPLVCSAFNADFDGDQMAVHVPLSLEAQLEARVLMMSTNNVLSPANGAPIIVPSQDMVLGLYYTTMERRGMKGEGMAFSSVEEVEHALAAGEVHLHATITARIKQIDEEGNEVVKRYQTTPGRLRLGNLLPLNAKAPFELVNRLLRKKDVQNVIDTVYRYCGQKESVIFCDQIMGMGFREAFKAGISFGKDDMLIPDTKWPIVNEVRDQVKEFEQQYMDGLITQGEKYNKVVDAWSKCSDKVAGEMMAEISAVRYDDAGAEKEPNSVYMMSHSGARGSPAQMKQLGGMRGLMAKPNGEIIETPIISNFKEGLTVLEYFNSTHGARKGLADTALKTANSGYLTRRLVDVAQDCIVRTHDCGTENAITASAAVNEGEVVSPLAERVLGRVAAEDILVPGSDEVIVARGELIDERRADLVDQANVASVRIRSPLTCEAEEGVCAMCYGRDLARGTLVNIGEAVGIIAAQSIGEPGTQLTMRTFHIGGIAQGGQQSFLEASQEGRIEFRNPNLLENANGEQIVMGRNMQLAIIDEAGQERATHKLTYGAKVHVKDGQTVKRATRLFEWDPYTLPIIAEKAGVARFVDLVSGISVREDTDEATGMTQKIVSDWRSTPKGGDLKPEIIIMNPETGDPMRNEAGNPISYPMSVEAILSVEDGQTVRAGDVVARIPREGARTKDITGGLPRVAELFEARRPKDHAIIAENDGYVRFGKDYKNKRRITIEPVDDTLNSVEYMVPKGKHIPVQEGDFVQKGDYIMDGNPAPHDILRILGVEALANYMIDEVQEVYRLQGVKINDKHIEVIVRQMLQKYEILDSGETTLLKGEHVDKAELDEVNQKAMDHGMRPAHAEPILLGITKASLQTRSFISAASFQETTRVLTEASVQGKRDKLVGLKENVIVGRLIPAGTGGATSRVKKIAHDRDQKVIDTRRAEAESAAALAAPTDEVIDLGSEDSGLVETVENREE.

Positions 72, 74, 87, and 90 each coordinate Zn(2+). Mg(2+)-binding residues include aspartate 463, aspartate 465, and aspartate 467. Zn(2+) is bound by residues cysteine 811, cysteine 885, cysteine 892, and cysteine 895.

It belongs to the RNA polymerase beta' chain family. As to quaternary structure, the RNAP catalytic core consists of 2 alpha, 1 beta, 1 beta' and 1 omega subunit. When a sigma factor is associated with the core the holoenzyme is formed, which can initiate transcription. It depends on Mg(2+) as a cofactor. The cofactor is Zn(2+).

It catalyses the reaction RNA(n) + a ribonucleoside 5'-triphosphate = RNA(n+1) + diphosphate. In terms of biological role, DNA-dependent RNA polymerase catalyzes the transcription of DNA into RNA using the four ribonucleoside triphosphates as substrates. The protein is DNA-directed RNA polymerase subunit beta' of Cereibacter sphaeroides (strain ATCC 17029 / ATH 2.4.9) (Rhodobacter sphaeroides).